We begin with the raw amino-acid sequence, 200 residues long: MNEIYLIGLGNPGKKYFNSRHNIGFLLLESFSKKYNSNFLLKDKLKSSCSEFQINNSTFKLFLPNTFMNNSGDAVRAIVDWYKINLDQILIIVDDKDLPLGKIRFRRKGSSGGHNGLKSIIEQLQTQNFKRIRIGIGSPPITNGKNHFNTISHVLGNISLDEKSILDKVYSRVIESLEQINTKKEEYIINELNSFDKDQP.

Position 16 (Tyr16) interacts with tRNA. The active-site Proton acceptor is the His21. TRNA is bound by residues Phe67, Asn69, and Asn115.

This sequence belongs to the PTH family. Monomer.

Its subcellular location is the cytoplasm. It catalyses the reaction an N-acyl-L-alpha-aminoacyl-tRNA + H2O = an N-acyl-L-amino acid + a tRNA + H(+). In terms of biological role, hydrolyzes ribosome-free peptidyl-tRNAs (with 1 or more amino acids incorporated), which drop off the ribosome during protein synthesis, or as a result of ribosome stalling. Catalyzes the release of premature peptidyl moieties from peptidyl-tRNA molecules trapped in stalled 50S ribosomal subunits, and thus maintains levels of free tRNAs and 50S ribosomes. The sequence is that of Peptidyl-tRNA hydrolase from Prochlorococcus marinus (strain AS9601).